Here is a 964-residue protein sequence, read N- to C-terminus: Protein translocase subunit SecA (964 aa).

Residues Gln-86, 104–108, and Asp-494 contribute to the ATP site; that span reads GEGKT. The disordered stretch occupies residues 848–964; that stretch reads AESADTIAVA…YKMCHGQNEK (117 aa). A compositionally biased stretch (acidic residues) spans 871-882; the sequence is AEGEVEEEDEDT. A compositionally biased stretch (low complexity) spans 889–900; it reads AESAAASGAGES. Cys-947, Cys-949, Cys-958, and His-959 together coordinate Zn(2+).

It belongs to the SecA family. Monomer and homodimer. Part of the essential Sec protein translocation apparatus which comprises SecA, SecYEG and auxiliary proteins SecDF. Other proteins may also be involved. Zn(2+) is required as a cofactor.

The protein resides in the cell membrane. It is found in the cytoplasm. It catalyses the reaction ATP + H2O + cellular proteinSide 1 = ADP + phosphate + cellular proteinSide 2.. In terms of biological role, part of the Sec protein translocase complex. Interacts with the SecYEG preprotein conducting channel. Has a central role in coupling the hydrolysis of ATP to the transfer of proteins into and across the cell membrane, serving as an ATP-driven molecular motor driving the stepwise translocation of polypeptide chains across the membrane. This is Protein translocase subunit SecA from Bifidobacterium longum (strain NCC 2705).